The sequence spans 164 residues: Phosphopantetheine adenylyltransferase (164 aa).

Serine 10 contributes to the substrate binding site. ATP is bound by residues 10-11 and histidine 18; that span reads SF. Substrate contacts are provided by lysine 42, leucine 74, and arginine 88. ATP is bound by residues 89-91, glutamate 99, and 124-130; these read GLR and YSFLSSS.

Belongs to the bacterial CoaD family. Homohexamer. Mg(2+) is required as a cofactor.

It is found in the cytoplasm. The enzyme catalyses (R)-4'-phosphopantetheine + ATP + H(+) = 3'-dephospho-CoA + diphosphate. It participates in cofactor biosynthesis; coenzyme A biosynthesis; CoA from (R)-pantothenate: step 4/5. In terms of biological role, reversibly transfers an adenylyl group from ATP to 4'-phosphopantetheine, yielding dephospho-CoA (dPCoA) and pyrophosphate. The chain is Phosphopantetheine adenylyltransferase from Exiguobacterium sibiricum (strain DSM 17290 / CCUG 55495 / CIP 109462 / JCM 13490 / 255-15).